Consider the following 738-residue polypeptide: 1,4-alpha-glucan branching enzyme GlgB (738 aa).

Aspartate 399 serves as the catalytic Nucleophile. Catalysis depends on glutamate 452, which acts as the Proton donor.

The protein belongs to the glycosyl hydrolase 13 family. GlgB subfamily. In terms of assembly, monomer.

It carries out the reaction Transfers a segment of a (1-&gt;4)-alpha-D-glucan chain to a primary hydroxy group in a similar glucan chain.. Its pathway is glycan biosynthesis; glycogen biosynthesis. Its function is as follows. Catalyzes the formation of the alpha-1,6-glucosidic linkages in glycogen by scission of a 1,4-alpha-linked oligosaccharide from growing alpha-1,4-glucan chains and the subsequent attachment of the oligosaccharide to the alpha-1,6 position. This chain is 1,4-alpha-glucan branching enzyme GlgB, found in Chlamydia trachomatis serovar L2b (strain UCH-1/proctitis).